Here is a 275-residue protein sequence, read N- to C-terminus: MIKLLFTYICTYTYKLYALYHMDYACVCMYKYKGIVTLQVCLFYIKLRVFLSNFTFSSSILALKNPNNSLIKIMAILPENSSNLDLTISVPGFSSSPLSDEGSGGGRDQLRLDMNRLPSSEDGDDEEFSHDDGSAPPRKKLRLTREQSRLLEDSFRQNHTLNPKQKEVLAKHLMLRPRQIEVWFQNRRARSKLKQTEMECEYLKRWFGSLTEENHRLHREVEELRAMKVGPTTVNSASSLTMCPRCERVTPAASPSRAVVPVPAKKTFPPQERDR.

Residues 95 to 143 form a disordered region; sequence SSPLSDEGSGGGRDQLRLDMNRLPSSEDGDDEEFSHDDGSAPPRKKLRL. The segment at residues 136–195 is a DNA-binding region (homeobox); sequence PPRKKLRLTREQSRLLEDSFRQNHTLNPKQKEVLAKHLMLRPRQIEVWFQNRRARSKLKQ. The segment at 203–224 is leucine-zipper; the sequence is LKRWFGSLTEENHRLHREVEEL. The interval 252-275 is disordered; the sequence is AASPSRAVVPVPAKKTFPPQERDR.

It belongs to the HD-ZIP homeobox family. Class II subfamily.

It is found in the nucleus. Probable transcription factor. The polypeptide is Homeobox-leucine zipper protein ATHB-17 (ATHB-17) (Arabidopsis thaliana (Mouse-ear cress)).